A 471-amino-acid chain; its full sequence is Alpha-amylase (471 aa).

Position 1 is a pyrrolidone carboxylic acid (Q1). The cysteines at positions 28 and 84 are disulfide-linked. Ca(2+) is bound by residues N98, R146, and D155. A disulfide bond links C134 and C148. Residue R183 participates in chloride binding. The active-site Nucleophile is the D185. A Ca(2+)-binding site is contributed by H189. E222 serves as the catalytic Proton donor. The chloride site is built by N285 and R321. Positions 326–343 (FDFTDNDQGPPQDGSGNL) are enriched in polar residues. The tract at residues 326–346 (FDFTDNDQGPPQDGSGNLISP) is disordered. Intrachain disulfides connect C354-C360 and C425-C437.

It belongs to the glycosyl hydrolase 13 family. In terms of assembly, monomer. Ca(2+) serves as cofactor. The cofactor is chloride.

The enzyme catalyses Endohydrolysis of (1-&gt;4)-alpha-D-glucosidic linkages in polysaccharides containing three or more (1-&gt;4)-alpha-linked D-glucose units.. This is Alpha-amylase from Tenebrio molitor (Yellow mealworm beetle).